The sequence spans 97 residues: MKIRPLHDRVIIKRIEAEAKSAGGIVLTGTAAQKSTRGEVLAVGTGRILDNGDVKALAVKVGDKVIFNEGYGVKTEKLDGQDVLILSETDILAIVEA.

Belongs to the GroES chaperonin family. Heptamer of 7 subunits arranged in a ring. Interacts with the chaperonin GroEL.

It is found in the cytoplasm. Its function is as follows. Together with the chaperonin GroEL, plays an essential role in assisting protein folding. The GroEL-GroES system forms a nano-cage that allows encapsulation of the non-native substrate proteins and provides a physical environment optimized to promote and accelerate protein folding. GroES binds to the apical surface of the GroEL ring, thereby capping the opening of the GroEL channel. The polypeptide is Co-chaperonin GroES (Aeromonas salmonicida (strain A449)).